A 268-amino-acid polypeptide reads, in one-letter code: Probable chemotaxis protein methyltransferase (268 aa).

The CheR-type methyltransferase domain occupies 1 to 262; sequence MIYSDAGIFL…GITTYRYTTK (262 aa). Residues Asn60, Thr62, Arg66, Glu104, Asp130, 188–189, and 205–206 contribute to the S-adenosyl-L-methionine site; these read NL and RN.

It catalyses the reaction L-glutamyl-[protein] + S-adenosyl-L-methionine = [protein]-L-glutamate 5-O-methyl ester + S-adenosyl-L-homocysteine. Methylation of the membrane-bound methyl-accepting chemotaxis proteins (MCP) to form gamma-glutamyl methyl ester residues in MCP. The protein is Probable chemotaxis protein methyltransferase (cheRch1) of Rhizobium etli (strain ATCC 51251 / DSM 11541 / JCM 21823 / NBRC 15573 / CFN 42).